A 261-amino-acid polypeptide reads, in one-letter code: MIRDKSAKRPAKDAPKKAAVKEAAPVKASFRRERALIKRGIWPVAGCDEAGRGPLAGPVVAAAVILDPDRIPRGIDDSKRLTAEQREKLFDKICATAQVSVAVASPARIDRDNILRASLWALKRAVVALPEAPRHVFVDGRDRLDTACDCEAVIGGDGIVLSIAAASIVAKVTRDRLMCALAQDCPGYGFEQHKGYGVPEHLDALNRLGPTVHHRSFFAPVAAARAKHMPWTVEPVRDLFAATEVEVQLEASVEIDASANL.

Residues 1–20 (MIRDKSAKRPAKDAPKKAAV) show a composition bias toward basic and acidic residues. Positions 1–23 (MIRDKSAKRPAKDAPKKAAVKEA) are disordered. The RNase H type-2 domain maps to 42–230 (WPVAGCDEAG…VAAARAKHMP (189 aa)). A divalent metal cation contacts are provided by Asp48, Glu49, and Asp139.

The protein belongs to the RNase HII family. Mn(2+) is required as a cofactor. Mg(2+) serves as cofactor.

It is found in the cytoplasm. The enzyme catalyses Endonucleolytic cleavage to 5'-phosphomonoester.. Endonuclease that specifically degrades the RNA of RNA-DNA hybrids. This is Ribonuclease HII from Bradyrhizobium diazoefficiens (strain JCM 10833 / BCRC 13528 / IAM 13628 / NBRC 14792 / USDA 110).